The sequence spans 283 residues: tRNA pseudouridine synthase A (283 aa).

Asp-73 (nucleophile) is an active-site residue. The tract at residues 120–124 is RNA binding; that stretch reads FHARF. Tyr-131 is a substrate binding site. Residues 181–185 form an interaction with tRNA region; it reads QCQSR.

The protein belongs to the tRNA pseudouridine synthase TruA family. As to quaternary structure, homodimer.

The enzyme catalyses uridine(38/39/40) in tRNA = pseudouridine(38/39/40) in tRNA. In terms of biological role, formation of pseudouridine at positions 38, 39 and 40 in the anticodon stem and loop of transfer RNAs. This is tRNA pseudouridine synthase A from Pectobacterium atrosepticum (strain SCRI 1043 / ATCC BAA-672) (Erwinia carotovora subsp. atroseptica).